The primary structure comprises 131 residues: Lysozyme C (131 aa).

The region spanning 2 to 131 is the C-type lysozyme domain; it reads KIYEQCELAR…VSQWIKGCKL (130 aa). 4 disulfide bridges follow: C7-C129, C31-C117, C66-C82, and C78-C96. Active-site residues include E36 and D54.

It belongs to the glycosyl hydrolase 22 family. Monomer.

The protein resides in the secreted. It catalyses the reaction Hydrolysis of (1-&gt;4)-beta-linkages between N-acetylmuramic acid and N-acetyl-D-glucosamine residues in a peptidoglycan and between N-acetyl-D-glucosamine residues in chitodextrins.. Lysozymes have primarily a bacteriolytic function; those in tissues and body fluids are associated with the monocyte-macrophage system and enhance the activity of immunoagents. Has strong bacteriolytic activity against M.luteus and V.cholerae, weak bacteriolytic activity against P.aeruginosa and no activity against A.hydrophila. The polypeptide is Lysozyme C (LYZ) (Pelodiscus sinensis (Chinese softshell turtle)).